The following is an 830-amino-acid chain: DNA replication licensing factor MCM6 (830 aa).

A C4-type zinc finger spans residues 159 to 186 (CLDCGNVVKNVEQQFKYTEPIICVNATC). Residues 349 to 555 (FFNKIVDSIC…NTDYHIAHHI (207 aa)) enclose the MCM domain. 399–406 (GDPSCAKS) contacts ATP. The Arginine finger signature appears at 531-534 (SRFD). Residues 671–710 (DFQDADDGTNVPADNDAGQPTEMDAAPQQDGPENEQAADT) form a disordered region.

Belongs to the MCM family. Component of the minichromosome maintenance (MCM) complex, a heterotetramer composed of MCM2, MCM3, MCM4, MCM5, MCM6 and MCM7.

It localises to the nucleus. The enzyme catalyses ATP + H2O = ADP + phosphate + H(+). Probable component of the MCM2-7 complex (MCM complex) that may function as a DNA helicase and which is essential to undergo a single round of replication initiation and elongation per cell cycle in eukaryotic cells. The chain is DNA replication licensing factor MCM6 (MCM6) from Oryza sativa subsp. indica (Rice).